Reading from the N-terminus, the 283-residue chain is Homeobox protein BarH-like 2 (283 aa).

2 disordered regions span residues 107–141 (AAAA…RRSR) and 198–283 (KGGQ…PPLS). The segment covering 122-132 (SSESETEQPTP) has biased composition (polar residues). A DNA-binding region (homeobox) is located at residues 139-198 (RSRTIFTELQLMGLEKKFQKQKYLSTPDRLDLAQSLGLTQLQVKTWYQNRRMKWKKMVLK). Positions 268–277 (QPQELSEASS) are enriched in low complexity.

The protein belongs to the BAR homeobox family. Nervous system, particularly in the telencephalon, spinal cord, and dorsal root ganglia.

The protein resides in the nucleus. Its function is as follows. Transcription factor. Binds optimally to the DNA consensus sequence 5'-YYTAATGRTTTTY-3'. May control the expression of neural adhesion molecules such as L1 or Ng-CAM during embryonic development of both the central and peripherical nervous system. May be involved in controlling adhesive processes in keratinizing epithelia. In Mus musculus (Mouse), this protein is Homeobox protein BarH-like 2 (Barx2).